We begin with the raw amino-acid sequence, 507 residues long: Hippocampus abundant transcript-like protein 1 (507 aa).

Residues methionine 1–lysine 27 are disordered. Residues methionine 1–alanine 51 are Extracellular-facing. Residues phenylalanine 52–leucine 72 traverse the membrane as a helical segment. Over histidine 73–asparagine 84 the chain is Cytoplasmic. Residues glycine 85–leucine 105 traverse the membrane as a helical segment. At serine 106–proline 113 the chain is on the extracellular side. Residues phenylalanine 114 to tryptophan 134 form a helical membrane-spanning segment. Residues tryptophan 135–tyrosine 136 are Cytoplasmic-facing. The chain crosses the membrane as a helical span at residues phenylalanine 137–valine 157. At alanine 158–tyrosine 170 the chain is on the extracellular side. Residues glycine 171–leucine 191 traverse the membrane as a helical segment. Residues serine 192–serine 198 are Cytoplasmic-facing. A helical transmembrane segment spans residues leucine 199–valine 219. Residues proline 220–leucine 257 lie on the Extracellular side of the membrane. Residues leucine 258–phenylalanine 278 form a helical membrane-spanning segment. At leucine 279–glutamine 283 the chain is on the cytoplasmic side. A helical transmembrane segment spans residues valine 284–isoleucine 304. Residues valine 305–threonine 323 lie on the Extracellular side of the membrane. Residues valine 324–alanine 344 traverse the membrane as a helical segment. Over tryptophan 345–methionine 347 the chain is Cytoplasmic. The chain crosses the membrane as a helical span at residues tryptophan 348–isoleucine 368. At serine 369 to glycine 389 the chain is on the extracellular side. A helical transmembrane segment spans residues leucine 390–leucine 410. The Cytoplasmic portion of the chain corresponds to serine 411–proline 430. The chain crosses the membrane as a helical span at residues glycine 431–isoleucine 451. Over proline 452–leucine 507 the chain is Extracellular. Polar residues predominate over residues glycine 459–threonine 473. Positions glycine 459–isoleucine 483 are disordered. N-linked (GlcNAc...) asparagine glycosylation is found at asparagine 464 and asparagine 465.

This sequence belongs to the major facilitator superfamily.

It is found in the membrane. The protein is Hippocampus abundant transcript-like protein 1 of Mus musculus (Mouse).